Reading from the N-terminus, the 320-residue chain is tRNA-cytidine(32) 2-sulfurtransferase (320 aa).

The short motif at 54 to 59 (SGGKDS) is the PP-loop motif element. Cys-129, Cys-132, and Cys-220 together coordinate [4Fe-4S] cluster.

The protein belongs to the TtcA family. As to quaternary structure, homodimer. The cofactor is Mg(2+). It depends on [4Fe-4S] cluster as a cofactor.

It localises to the cytoplasm. The enzyme catalyses cytidine(32) in tRNA + S-sulfanyl-L-cysteinyl-[cysteine desulfurase] + AH2 + ATP = 2-thiocytidine(32) in tRNA + L-cysteinyl-[cysteine desulfurase] + A + AMP + diphosphate + H(+). It participates in tRNA modification. Its function is as follows. Catalyzes the ATP-dependent 2-thiolation of cytidine in position 32 of tRNA, to form 2-thiocytidine (s(2)C32). The sulfur atoms are provided by the cysteine/cysteine desulfurase (IscS) system. This chain is tRNA-cytidine(32) 2-sulfurtransferase, found in Bordetella pertussis (strain Tohama I / ATCC BAA-589 / NCTC 13251).